A 222-amino-acid polypeptide reads, in one-letter code: Sugar fermentation stimulation protein homolog (222 aa).

Belongs to the SfsA family.

This is Sugar fermentation stimulation protein homolog from Thermotoga neapolitana (strain ATCC 49049 / DSM 4359 / NBRC 107923 / NS-E).